The primary structure comprises 397 residues: Elongation factor Tu 1 (397 aa).

Residues 10 to 207 form the tr-type G domain; it reads KPHVNVGTIG…TLDSYIPEPV (198 aa). Residues 19–26 form a G1 region; the sequence is GHVDHGKT. Residue 19-26 coordinates GTP; sequence GHVDHGKT. Position 26 (Thr26) interacts with Mg(2+). Positions 60–64 are G2; it reads GITIN. A G3 region spans residues 81-84; the sequence is DCPG. GTP is bound by residues 81 to 85 and 136 to 139; these read DCPGH and NKAD. The tract at residues 136–139 is G4; it reads NKAD. Residues 174 to 176 form a G5 region; sequence SAL.

This sequence belongs to the TRAFAC class translation factor GTPase superfamily. Classic translation factor GTPase family. EF-Tu/EF-1A subfamily. Monomer.

The protein localises to the cytoplasm. It catalyses the reaction GTP + H2O = GDP + phosphate + H(+). Functionally, GTP hydrolase that promotes the GTP-dependent binding of aminoacyl-tRNA to the A-site of ribosomes during protein biosynthesis. The protein is Elongation factor Tu 1 of Stutzerimonas stutzeri (strain A1501) (Pseudomonas stutzeri).